The following is a 355-amino-acid chain: UDP-3-O-acylglucosamine N-acyltransferase (355 aa).

His-252 functions as the Proton acceptor in the catalytic mechanism.

It belongs to the transferase hexapeptide repeat family. LpxD subfamily. In terms of assembly, homotrimer.

The catalysed reaction is a UDP-3-O-[(3R)-3-hydroxyacyl]-alpha-D-glucosamine + a (3R)-hydroxyacyl-[ACP] = a UDP-2-N,3-O-bis[(3R)-3-hydroxyacyl]-alpha-D-glucosamine + holo-[ACP] + H(+). It functions in the pathway bacterial outer membrane biogenesis; LPS lipid A biosynthesis. Functionally, catalyzes the N-acylation of UDP-3-O-acylglucosamine using 3-hydroxyacyl-ACP as the acyl donor. Is involved in the biosynthesis of lipid A, a phosphorylated glycolipid that anchors the lipopolysaccharide to the outer membrane of the cell. The polypeptide is UDP-3-O-acylglucosamine N-acyltransferase (Polynucleobacter asymbioticus (strain DSM 18221 / CIP 109841 / QLW-P1DMWA-1) (Polynucleobacter necessarius subsp. asymbioticus)).